A 348-amino-acid polypeptide reads, in one-letter code: Mycothiol acetyltransferase (348 aa).

2 N-acetyltransferase domains span residues 12–156 (TSMR…VDVT) and 169–330 (VAVR…HGTP). Glu-44 is a binding site for 1D-myo-inositol 2-(L-cysteinylamino)-2-deoxy-alpha-D-glucopyranoside. Residue 91 to 93 (LVV) participates in acetyl-CoA binding. Residues Glu-196, Lys-235, and Glu-253 each coordinate 1D-myo-inositol 2-(L-cysteinylamino)-2-deoxy-alpha-D-glucopyranoside. Acetyl-CoA is bound by residues 257–259 (VGV) and 264–270 (QGLGMGR). Tyr-291 is a 1D-myo-inositol 2-(L-cysteinylamino)-2-deoxy-alpha-D-glucopyranoside binding site. 296 to 301 (NTVAVH) contacts acetyl-CoA. The interval 320-348 (PPAGSPAHGTPLVRVTDTPSSPGDATMGS) is disordered. The span at 336–348 (DTPSSPGDATMGS) shows a compositional bias: polar residues.

This sequence belongs to the acetyltransferase family. MshD subfamily. Monomer.

It catalyses the reaction 1D-myo-inositol 2-(L-cysteinylamino)-2-deoxy-alpha-D-glucopyranoside + acetyl-CoA = mycothiol + CoA + H(+). Catalyzes the transfer of acetyl from acetyl-CoA to desacetylmycothiol (Cys-GlcN-Ins) to form mycothiol. The sequence is that of Mycothiol acetyltransferase from Cellulomonas flavigena (strain ATCC 482 / DSM 20109 / BCRC 11376 / JCM 18109 / NBRC 3775 / NCIMB 8073 / NRS 134).